The sequence spans 515 residues: Slowpoke-binding protein (515 aa).

Residues 1 to 31 (MFKFNKAAQQQRIDNRNSAVTGHDPFVRPPV) form a disordered region. Polar residues predominate over residues 7-20 (AAQQQRIDNRNSAV). Ser-54 and Ser-79 each carry phosphoserine. Residues 73–82 (SSNRSASSEQ) are compositionally biased toward polar residues. The interval 73 to 94 (SSNRSASSEQDNSDLSEHSEKS) is disordered. Residues 191 to 203 (NWFLVTDASVRTD) form an interaction with Slo region. The interval 483 to 503 (SLSEANSPCTPPSTPHDRRTG) is disordered.

As to quaternary structure, interacts specifically with Slo; which activates Slo activity. Interacts with 14-3-3-zeta when phosphorylated. Forms a heterotetrameric complex containing phosphorylated Slob, Slo and 14-3-3-zeta, which represses Slo activity due to the indirect interaction between Slo and 14-3-3-zeta. Phosphorylated. Phosphorylation of Ser-54 and Ser-79 is required for the interaction with 14-3-3-zeta but not with that of Slo. In terms of tissue distribution, expressed in head. In larval brain, it is expressed in the mushroom body. Also expressed in larval muscles.

Its subcellular location is the cytoplasm. Regulator of calcium-activated channel Slo. Increases or decreases the voltage sensitivity of Slo, depending on the absence or presence of 14-3-3-zeta in the complex, respectively. This Drosophila melanogaster (Fruit fly) protein is Slowpoke-binding protein (Slob).